The chain runs to 253 residues: Adenosylcobinamide-GDP ribazoletransferase (253 aa).

A run of 7 helical transmembrane segments spans residues 33 to 53 (ISPL…YVLL), 56 to 76 (ILEA…RGFN), 106 to 126 (IGSG…VALL), 132 to 152 (FYTI…GLYI), 178 to 198 (VLLF…FLVF), 209 to 229 (LGGS…PLFL), and 233 to 253 (EITN…LYLH).

It belongs to the CobS family. Mg(2+) is required as a cofactor.

It is found in the cell membrane. It carries out the reaction alpha-ribazole + adenosylcob(III)inamide-GDP = adenosylcob(III)alamin + GMP + H(+). It catalyses the reaction alpha-ribazole 5'-phosphate + adenosylcob(III)inamide-GDP = adenosylcob(III)alamin 5'-phosphate + GMP + H(+). Its pathway is cofactor biosynthesis; adenosylcobalamin biosynthesis; adenosylcobalamin from cob(II)yrinate a,c-diamide: step 7/7. In terms of biological role, joins adenosylcobinamide-GDP and alpha-ribazole to generate adenosylcobalamin (Ado-cobalamin). Also synthesizes adenosylcobalamin 5'-phosphate from adenosylcobinamide-GDP and alpha-ribazole 5'-phosphate. The polypeptide is Adenosylcobinamide-GDP ribazoletransferase (Saccharolobus islandicus (strain M.16.27) (Sulfolobus islandicus)).